Here is a 270-residue protein sequence, read N- to C-terminus: MSKIAKTAIISPKAEINKGVEIGEFCVIGDGVKLDDGVKLHNNVTLQGHTFIGKNTEIFPFAVLGTQPQDLKYKGEYSELIVGEDNLIREFCMINPGTEGGIKKTLIGDKNLLMAYVHVAHDCVIGSHCILANGVTLAGHIEIGDYVNIGGLTAIHQFVRIAKGCMIAGKSALGKDVPPYCTVEGNRAFIRGLNRHRMRQLLESKDIDFIYALYKRLFRPVPSLRESAKLELEEHANNPFVKEICSFILESSRGVAYKSSEYSSEEKQEE.

Belongs to the transferase hexapeptide repeat family. LpxA subfamily. Homotrimer.

The protein resides in the cytoplasm. The enzyme catalyses a (3R)-hydroxyacyl-[ACP] + UDP-N-acetyl-alpha-D-glucosamine = a UDP-3-O-[(3R)-3-hydroxyacyl]-N-acetyl-alpha-D-glucosamine + holo-[ACP]. Its pathway is glycolipid biosynthesis; lipid IV(A) biosynthesis; lipid IV(A) from (3R)-3-hydroxytetradecanoyl-[acyl-carrier-protein] and UDP-N-acetyl-alpha-D-glucosamine: step 1/6. Its function is as follows. Involved in the biosynthesis of lipid A, a phosphorylated glycolipid that anchors the lipopolysaccharide to the outer membrane of the cell. This is Acyl-[acyl-carrier-protein]--UDP-N-acetylglucosamine O-acyltransferase from Helicobacter pylori (strain P12).